Here is a 264-residue protein sequence, read N- to C-terminus: Vacuolar protein sorting-associated protein 75 (264 aa).

At serine 3 the chain carries Phosphoserine. A disordered region spans residues leucine 223–valine 264.

The protein belongs to the nucleosome assembly protein (NAP) family. Homodimer. Homotetramer. Forms a complex with RTT109; consisting of a VPS75 dimer contacted by two RTT109 subunits. Interacts with RTT109; the interaction is direct. Interacts with ASF1. Interacts with histone H3/H4 heterodimers and heterotetramers via histone H3.

It localises to the nucleus. In terms of biological role, histone chaperone which acts as a cofactor stimulating histone H3 acetylation by RTT109. Preferentially stimulates histone H3 'Lys-9' acetylation by RTT109. May also stimulate histone H3 'Lys-56' acetylation by RTT109. Assembles nucleosomes (in vitro). The sequence is that of Vacuolar protein sorting-associated protein 75 (VPS75) from Saccharomyces cerevisiae (strain ATCC 204508 / S288c) (Baker's yeast).